The chain runs to 161 residues: Regulator of ribonuclease activity A (161 aa).

Belongs to the RraA family. Homotrimer. Binds to both RNA-binding sites in the C-terminal region of Rne and to RhlB.

The protein localises to the cytoplasm. In terms of biological role, globally modulates RNA abundance by binding to RNase E (Rne) and regulating its endonucleolytic activity. Can modulate Rne action in a substrate-dependent manner by altering the composition of the degradosome. Modulates RNA-binding and helicase activities of the degradosome. This is Regulator of ribonuclease activity A from Cronobacter sakazakii (strain ATCC BAA-894) (Enterobacter sakazakii).